The primary structure comprises 106 residues: Large ribosomal subunit protein eL42 (106 aa).

It belongs to the eukaryotic ribosomal protein eL42 family.

The sequence is that of Large ribosomal subunit protein eL42 (RPL44) from Candida tropicalis (Yeast).